We begin with the raw amino-acid sequence, 161 residues long: Cysteine dioxygenase (161 aa).

The Fe cation site is built by His-75, His-77, and His-125.

The protein belongs to the cysteine dioxygenase family. Fe cation is required as a cofactor.

The catalysed reaction is L-cysteine + O2 = 3-sulfino-L-alanine + H(+). The protein is Cysteine dioxygenase (cdoA) of Bacillus subtilis (strain 168).